The chain runs to 407 residues: Protein arginine N-methyltransferase 2 (407 aa).

Positions 186-407 constitute an RMT2 domain; the sequence is TAADQATYLK…YYYHPEIRFA (222 aa). S-adenosyl-L-methionine-binding positions include Tyr193, Met223, 246 to 251, 267 to 269, 294 to 295, and Asp315; these read FGMGII, EAH, and WQ.

The protein belongs to the class I-like SAM-binding methyltransferase superfamily. RMT2 methyltransferase family. As to quaternary structure, monomer.

It localises to the cytoplasm. The protein localises to the nucleus. Functionally, S-adenosyl-L-methionine-dependent protein-arginine N-methyltransferase that methylates the delta-nitrogen atom of arginine residues to form N5-methylarginine (type IV) in target proteins. Monomethylates ribosomal protein L12. The sequence is that of Protein arginine N-methyltransferase 2 from Kluyveromyces lactis (strain ATCC 8585 / CBS 2359 / DSM 70799 / NBRC 1267 / NRRL Y-1140 / WM37) (Yeast).